Here is a 100-residue protein sequence, read N- to C-terminus: ATP-dependent Clp protease adapter protein ClpS (100 aa).

The protein belongs to the ClpS family. In terms of assembly, binds to the N-terminal domain of the chaperone ClpA.

In terms of biological role, involved in the modulation of the specificity of the ClpAP-mediated ATP-dependent protein degradation. The polypeptide is ATP-dependent Clp protease adapter protein ClpS (Neisseria meningitidis serogroup B (strain ATCC BAA-335 / MC58)).